An 86-amino-acid chain; its full sequence is Small ribosomal subunit protein bS20 (86 aa).

It belongs to the bacterial ribosomal protein bS20 family.

Binds directly to 16S ribosomal RNA. This is Small ribosomal subunit protein bS20 from Buchnera aphidicola subsp. Cinara cedri (strain Cc).